Reading from the N-terminus, the 700-residue chain is Glycine--tRNA ligase beta subunit (700 aa).

This sequence belongs to the class-II aminoacyl-tRNA synthetase family. In terms of assembly, tetramer of two alpha and two beta subunits.

It localises to the cytoplasm. The enzyme catalyses tRNA(Gly) + glycine + ATP = glycyl-tRNA(Gly) + AMP + diphosphate. In Magnetococcus marinus (strain ATCC BAA-1437 / JCM 17883 / MC-1), this protein is Glycine--tRNA ligase beta subunit.